Consider the following 1341-residue polypeptide: Subtilisin-like protease 2 (1341 aa).

The first 18 residues, 1–18 (MLNIIYVVSLILIKFIFY), serve as a signal peptide directing secretion. Residues 19-686 (KECNNNNNYY…KLYNNKYSFL (668 aa)) constitute a propeptide, inhibition peptide. Disordered stretches follow at residues 85 to 107 (EKKT…EKKK) and 143 to 171 (ADVS…NYKN). N-linked (GlcNAc...) asparagine glycans are attached at residues Asn165, Asn343, Asn449, Asn453, and Asn492. The segment at 415-474 (KKSKKEKENTQQKGGNNPNVDINILNNNNNNNNNNNSNNNSNSMNDEEINYNNNNNNKES) is disordered. Low complexity predominate over residues 430-474 (NNPNVDINILNNNNNNNNNNNSNNNSNSMNDEEINYNNNNNNKES). The tract at residues 499 to 530 (IYHNKNDNSYKNKKEGTGKNNDNNDPNNNNNK) is disordered. The span at 502-515 (NKNDNSYKNKKEGT) shows a compositional bias: basic and acidic residues. Over residues 517–530 (KNNDNNDPNNNNNK) the composition is skewed to low complexity. Asn550, Asn641, and Asn728 each carry an N-linked (GlcNAc...) asparagine glycan. Residues 687–1136 (NKFLNIEPLI…LYNLYEYDSH (450 aa)) are Extracellular-facing. A Peptidase S8 domain is found at 726-1019 (TWNLSIIRVF…DSLVNAEGAV (294 aa)). Active-site charge relay system residues include Asp754 and His797. N-linked (GlcNAc...) asparagine glycans are attached at residues Asn820, Asn856, Asn892, and Asn950. Catalysis depends on Ser960, which acts as the Charge relay system. N-linked (GlcNAc...) asparagine glycans are attached at residues Asn1009 and Asn1105. The helical transmembrane segment at 1137–1157 (YLLASVILFFLALLSIFVGMI) threads the bilayer. At 1158 to 1341 (YMKSRKHSDK…MNQLDDMFMK (184 aa)) the chain is on the cytoplasmic side.

The protein belongs to the peptidase S8 family. In terms of processing, proteolytically cleaved at the N-terminus to generate a 74kDa intermediate which is further processed into a 72kDa form. The first maturation cleavage is autocatalytic, occurs in the ER and is necessary for the subsequent SUB2 trafficking to the microneme. The second cleavage may be mediated by PMX/plasmepsin X.

Its subcellular location is the cell membrane. It localises to the cytoplasmic vesicle. The protein localises to the secretory vesicle. The protein resides in the microneme membrane. The catalysed reaction is Hydrolysis of proteins with broad specificity for peptide bonds, and a preference for a large uncharged residue in P1. Hydrolyzes peptide amides.. With respect to regulation, activation may be calcium-dependent. Inhibited by the non-covalent interaction with the cleaved propeptide. Functionally, serine protease which plays an essential role in the shedding of AMA1, MSP1 and MSP7 from the surface of the invading merozoite; this step is essential for productive invasion and the release of the adhesion between the erythrocyte and the merozoite. May cleave TRAMP/PTTRAMP, thereby shedding TRAMP from the merozoite surface during erythrocyte invasion. The sequence is that of Subtilisin-like protease 2 from Plasmodium falciparum (isolate 3D7).